We begin with the raw amino-acid sequence, 342 residues long: UV excision repair protein RAD23 homolog (342 aa).

The Ubiquitin-like domain maps to 1 to 76; the sequence is MKVTIKNINK…IVMMIKKPRE (76 aa). Low complexity predominate over residues 77–151; the sequence is APATTPAPST…TPGSTSTTSP (75 aa). The segment at 77–157 is disordered; sequence APATTPAPST…TTSPQQSSDF (81 aa). UBA domains follow at residues 161 to 201 and 297 to 338; these read TELE…LVSG and QEES…LFET.

The protein belongs to the RAD23 family.

It localises to the nucleus. The protein localises to the cytoplasm. May play a role both in proteasomal degradation of misfolded proteins and DNA repair. This chain is UV excision repair protein RAD23 homolog (rcbA), found in Dictyostelium discoideum (Social amoeba).